The chain runs to 166 residues: Phosphopantetheine adenylyltransferase (166 aa).

Thr10 serves as a coordination point for substrate. Residues 10–11 (TF) and His18 contribute to the ATP site. Substrate contacts are provided by Lys42, Leu74, and Arg88. ATP-binding positions include 89 to 91 (GLR), Glu99, and 124 to 130 (NSFISSS).

The protein belongs to the bacterial CoaD family. As to quaternary structure, homohexamer. It depends on Mg(2+) as a cofactor.

It is found in the cytoplasm. It carries out the reaction (R)-4'-phosphopantetheine + ATP + H(+) = 3'-dephospho-CoA + diphosphate. The protein operates within cofactor biosynthesis; coenzyme A biosynthesis; CoA from (R)-pantothenate: step 4/5. Its function is as follows. Reversibly transfers an adenylyl group from ATP to 4'-phosphopantetheine, yielding dephospho-CoA (dPCoA) and pyrophosphate. The protein is Phosphopantetheine adenylyltransferase of Idiomarina loihiensis (strain ATCC BAA-735 / DSM 15497 / L2-TR).